The sequence spans 53 residues: UPF0391 membrane protein azo1750 (53 aa).

The next 2 membrane-spanning stretches (helical) occupy residues 6 to 26 (VIFL…IAAG) and 30 to 50 (IAKI…VLGM).

This sequence belongs to the UPF0391 family.

The protein resides in the cell membrane. This chain is UPF0391 membrane protein azo1750, found in Azoarcus sp. (strain BH72).